We begin with the raw amino-acid sequence, 392 residues long: G2/mitotic-specific cyclin-B2 (392 aa).

The protein belongs to the cyclin family. Cyclin AB subfamily. In terms of assembly, interacts with the CDK1 protein kinase to form a serine/threonine kinase holoenzyme complex also known as maturation promoting factor (MPF). The cyclin subunit imparts substrate specificity to the complex.

Its function is as follows. Essential for the control of the cell cycle at the G2/M (mitosis) transition. The polypeptide is G2/mitotic-specific cyclin-B2 (CCNB2) (Rana japonica (Japanese reddish frog)).